Consider the following 123-residue polypeptide: Large ribosomal subunit protein uL24 (123 aa).

It belongs to the universal ribosomal protein uL24 family. As to quaternary structure, part of the 50S ribosomal subunit.

In terms of biological role, one of two assembly initiator proteins, it binds directly to the 5'-end of the 23S rRNA, where it nucleates assembly of the 50S subunit. Its function is as follows. One of the proteins that surrounds the polypeptide exit tunnel on the outside of the subunit. The polypeptide is Large ribosomal subunit protein uL24 (Solibacter usitatus (strain Ellin6076)).